Here is a 142-residue protein sequence, read N- to C-terminus: Baculoviral IAP repeat-containing protein 5 (142 aa).

The BIR repeat unit spans residues 18–88 (RVSTFKNWPF…KHSSGCAFLS (71 aa)). The residue at position 20 (Ser-20) is a Phosphoserine; by AURKC. Lys-23 is modified (N6-acetyllysine). The residue at position 34 (Thr-34) is a Phosphothreonine; by CDK1 and CDK15. Residue Thr-48 is modified to Phosphothreonine. Residues Cys-57, Cys-60, His-77, and Cys-84 each coordinate Zn(2+). Residues Lys-90, Lys-110, Lys-112, and Lys-115 each carry the N6-acetyllysine modification. Thr-117 is modified (phosphothreonine; by AURKB). Lys-129 carries the post-translational modification N6-acetyllysine.

This sequence belongs to the IAP family. In terms of assembly, monomer or homodimer. Exists as a homodimer in the apo state and as a monomer in the CPC-bound state. The monomer protects cells against apoptosis more efficiently than the dimer. Only the dimeric form is capable of enhancing tubulin stability in cells. When phosphorylated, interacts with LAMTOR5/HBXIP; the resulting complex binds pro-CASP9, as well as active CASP9, but much less efficiently. Component of the chromosomal passenger complex (CPC) composed of at least BIRC5/survivin, CDCA8/borealin, INCENP, AURKB or AURKC; in the complex forms a triple-helix bundle-based subcomplex with INCENP and CDCA8. Interacts with JTB. Interacts (via BIR domain) with histone H3 phosphorylated at 'Thr-3' (H3pT3). Interacts with EVI5. Interacts with GTP-bound RAN in both the S and M phases of the cell cycle. Interacts with USP9X. Interacts with tubulin. Interacts with BIRC2/c-IAP1. The acetylated form at Lys-129 interacts with STAT3. The monomeric form deacetylated at Lys-129 interacts with XPO1/CRM1. The monomeric form interacts with XIAP/BIRC4. Both the dimeric and monomeric form can interact with DIABLO/SMAC. Interacts with BIRC6/bruce. Interacts with FBXL7; this interaction facilitates the polyubiquitination and subsequent proteasomal degradation of BIRC5 by the SCF(FBXL7) E3 ubiquitin-protein ligase complex. Ubiquitinated by the Cul9-RING ubiquitin-protein ligase complex, leading to its degradation. Ubiquitination is required for centrosomal targeting. Deubiquitinated by USP35 or USP38; leading to stabilization. Post-translationally, acetylation at Lys-129 results in its homodimerization, while deacetylation promotes the formation of monomers which heterodimerize with XPO1/CRM1 which facilitates its nuclear export. The acetylated form represses STAT3 transactivation. The dynamic equilibrium between its acetylation and deacetylation at Lys-129 determines its interaction with XPO1/CRM1, its subsequent subcellular localization, and its ability to inhibit STAT3 transactivation. In terms of processing, in vitro phosphorylation at Thr-117 by AURKB prevents interaction with INCENP and localization to mitotic chromosomes. Phosphorylation at Thr-48 by CK2 is critical for its mitotic and anti-apoptotic activities. Phosphorylation at Thr-34 by CDK15 is critical for its anti-apoptotic activity. Phosphorylation at Ser-20 by AURKC is critical for regulation of proper chromosome alignment and segregation, and possibly cytokinesis.

The protein resides in the cytoplasm. The protein localises to the nucleus. It localises to the chromosome. Its subcellular location is the centromere. It is found in the cytoskeleton. The protein resides in the spindle. The protein localises to the kinetochore. It localises to the midbody. Its function is as follows. Multitasking protein that has dual roles in promoting cell proliferation and preventing apoptosis. Component of a chromosome passage protein complex (CPC) which is essential for chromosome alignment and segregation during mitosis and cytokinesis. Acts as an important regulator of the localization of this complex; directs CPC movement to different locations from the inner centromere during prometaphase to midbody during cytokinesis and participates in the organization of the center spindle by associating with polymerized microtubules. Involved in the recruitment of CPC to centromeres during early mitosis via association with histone H3 phosphorylated at 'Thr-3' (H3pT3) during mitosis. The complex with RAN plays a role in mitotic spindle formation by serving as a physical scaffold to help deliver the RAN effector molecule TPX2 to microtubules. May counteract a default induction of apoptosis in G2/M phase. The acetylated form represses STAT3 transactivation of target gene promoters. May play a role in neoplasia. Inhibitor of CASP3 and CASP7. Essential for the maintenance of mitochondrial integrity and function. This Canis lupus familiaris (Dog) protein is Baculoviral IAP repeat-containing protein 5 (BIRC5).